A 430-amino-acid polypeptide reads, in one-letter code: Sesquiterpene synthase 15 (430 aa).

The Mg(2+) site is built by D182, D186, and E335. The short motif at 182 to 186 (DDIYD) is the DDXXD motif element.

This sequence belongs to the terpene synthase family. Tpsa subfamily. The cofactor is Mg(2+). Mn(2+) serves as cofactor.

It functions in the pathway secondary metabolite biosynthesis; terpenoid biosynthesis. In terms of biological role, sesquiterpene synthase involved in the biosynthesis of volatile compounds. No activity detected with geranyl diphosphate (GPP) and farnesyl diphosphate (FPP) as substrates. This is Sesquiterpene synthase 15 from Solanum lycopersicum (Tomato).